Here is a 579-residue protein sequence, read N- to C-terminus: Chromosomal replication initiator protein DnaA (579 aa).

The tract at residues 1-71 (MQDFWQAAAA…TALACEYWET (71 aa)) is domain I, interacts with DnaA modulators. The interval 71 to 242 (TQVSVHFVLD…QQSDTVHERS (172 aa)) is domain II. Disordered stretches follow at residues 131–196 (AGAQ…SAAH) and 212–240 (EASA…TVHE). The span at 171–183 (SQSQQSAQGRGAA) shows a compositional bias: low complexity. The tract at residues 243 to 459 (RLNPILTFDN…GALRKILAFS (217 aa)) is domain III, AAA+ region. Residues Gly287, Gly289, Lys290, and Thr291 each coordinate ATP. The domain IV, binds dsDNA stretch occupies residues 460-579 (NFHGKDITID…LHVLEQTLKG (120 aa)).

The protein belongs to the DnaA family. Oligomerizes as a right-handed, spiral filament on DNA at oriC.

It localises to the cytoplasm. Its function is as follows. Plays an essential role in the initiation and regulation of chromosomal replication. ATP-DnaA binds to the origin of replication (oriC) to initiate formation of the DNA replication initiation complex once per cell cycle. Binds the DnaA box (a 9 base pair repeat at the origin) and separates the double-stranded (ds)DNA. Forms a right-handed helical filament on oriC DNA; dsDNA binds to the exterior of the filament while single-stranded (ss)DNA is stabiized in the filament's interior. The ATP-DnaA-oriC complex binds and stabilizes one strand of the AT-rich DNA unwinding element (DUE), permitting loading of DNA polymerase. After initiation quickly degrades to an ADP-DnaA complex that is not apt for DNA replication. Binds acidic phospholipids. In Cupriavidus metallidurans (strain ATCC 43123 / DSM 2839 / NBRC 102507 / CH34) (Ralstonia metallidurans), this protein is Chromosomal replication initiator protein DnaA.